The sequence spans 175 residues: Ribosome maturation factor RimM (175 aa).

The PRC barrel domain occupies 100-173 (EGEYYFHEII…TIIIRPMEGL (74 aa)).

The protein belongs to the RimM family. Binds ribosomal protein uS19.

The protein resides in the cytoplasm. An accessory protein needed during the final step in the assembly of 30S ribosomal subunit, possibly for assembly of the head region. Essential for efficient processing of 16S rRNA. May be needed both before and after RbfA during the maturation of 16S rRNA. It has affinity for free ribosomal 30S subunits but not for 70S ribosomes. The polypeptide is Ribosome maturation factor RimM (Geobacillus kaustophilus (strain HTA426)).